The primary structure comprises 86 residues: Exodeoxyribonuclease 7 small subunit (86 aa).

Positions 1–27 (MQDELFETEKIPPKNTKNAKNAPKKSF) are disordered.

Belongs to the XseB family. In terms of assembly, heterooligomer composed of large and small subunits.

It is found in the cytoplasm. The catalysed reaction is Exonucleolytic cleavage in either 5'- to 3'- or 3'- to 5'-direction to yield nucleoside 5'-phosphates.. Its function is as follows. Bidirectionally degrades single-stranded DNA into large acid-insoluble oligonucleotides, which are then degraded further into small acid-soluble oligonucleotides. The protein is Exodeoxyribonuclease 7 small subunit of Helicobacter pylori (strain G27).